The primary structure comprises 509 residues: Protein WHAT'S THIS FACTOR 1 homolog, chloroplastic (509 aa).

The N-terminal 56 residues, 1 to 56 (MDAKLLLLPFPSPPATLHHHPPPPKSLFLGASLPLLHPPPPLRLLRPGAPRRLAVV), are a transit peptide targeting the chloroplast. Residues 65–393 (KEIPFDNVIQ…LKEKMRALVA (329 aa)) form the PORR domain. 2 disordered regions span residues 402–431 (VPATSEEADRTNGAAQMLSEGSDVEDDEDE) and 444–509 (SGGK…RERW). The segment covering 461–474 (ENDDSPPDFEDDDG) has biased composition (acidic residues).

It is found in the plastid. It localises to the chloroplast. Its function is as follows. RNA-binding protein involved in group II intron splicing. Binds specific group II introns and promotes their splicing. Functions in the context of a heterodimer with the ribonuclease III domain-containing protein RNC1. The chain is Protein WHAT'S THIS FACTOR 1 homolog, chloroplastic from Oryza sativa subsp. japonica (Rice).